Consider the following 91-residue polypeptide: DNA-directed RNA polymerase subunit omega (91 aa).

This sequence belongs to the RNA polymerase subunit omega family. The RNAP catalytic core consists of 2 alpha, 1 beta, 1 beta' and 1 omega subunit. When a sigma factor is associated with the core the holoenzyme is formed, which can initiate transcription.

The enzyme catalyses RNA(n) + a ribonucleoside 5'-triphosphate = RNA(n+1) + diphosphate. Its function is as follows. Promotes RNA polymerase assembly. Latches the N- and C-terminal regions of the beta' subunit thereby facilitating its interaction with the beta and alpha subunits. The polypeptide is DNA-directed RNA polymerase subunit omega (Shigella flexneri).